The chain runs to 444 residues: Methylenetetrahydrofolate--tRNA-(uracil-5-)-methyltransferase TrmFO (444 aa).

10–15 (GAGLAG) contacts FAD.

The protein belongs to the MnmG family. TrmFO subfamily. FAD is required as a cofactor.

The protein resides in the cytoplasm. It catalyses the reaction uridine(54) in tRNA + (6R)-5,10-methylene-5,6,7,8-tetrahydrofolate + NADH + H(+) = 5-methyluridine(54) in tRNA + (6S)-5,6,7,8-tetrahydrofolate + NAD(+). It carries out the reaction uridine(54) in tRNA + (6R)-5,10-methylene-5,6,7,8-tetrahydrofolate + NADPH + H(+) = 5-methyluridine(54) in tRNA + (6S)-5,6,7,8-tetrahydrofolate + NADP(+). Functionally, catalyzes the folate-dependent formation of 5-methyl-uridine at position 54 (M-5-U54) in all tRNAs. The sequence is that of Methylenetetrahydrofolate--tRNA-(uracil-5-)-methyltransferase TrmFO from Streptococcus pneumoniae (strain Taiwan19F-14).